A 1218-amino-acid chain; its full sequence is NACHT, LRR and PYD domains-containing protein 1a allele 5 (1218 aa).

Residues 1 to 29 (MGESQSKQESNTRVAQHGSQQDVDPTFQT) are compositionally biased toward polar residues. Disordered stretches follow at residues 1-44 (MGES…QVEQ) and 71-91 (EMDH…DRSE). Basic residues predominate over residues 77-87 (RRHSHQSKKKL). One can recognise an NACHT domain in the interval 175–484 (QLVIIEGAAG…EFFAAMSYIL (310 aa)). 181-188 (GAAGIGKS) contributes to the ATP binding site. LRR repeat units lie at residues 343–364 (KERN…LTLC), 673–693 (NLEE…RSLC), and 730–750 (RLAE…RQLC). A compositionally biased stretch (polar residues) spans 799–815 (TMPTENTDGEESLTSSK). The tract at residues 799–842 (TMPTENTDGEESLTSSKQQQQQSGDKHMEPLGTDDDFWGPSGPV) is disordered. Positions 835-968 (FWGPSGPVST…HFAVLENPSF (134 aa)) are ZU5. Residues 835–1118 (FWGPSGPVST…LRPALPRMAS (284 aa)) form the FIIND domain. A UPA region spans residues 969–1118 (SPMGVLLRMI…LRPALPRMAS (150 aa)). The CARD domain occupies 1122–1211 (DAPALLHFVD…HLIMDLLEKS (90 aa)).

The protein belongs to the NLRP family. As to quaternary structure, interacts (via LRR repeats) with BCL2 and BCL2L1 (via the loop between motifs BH4 and BH3). Interacts with NOD2; this interaction is enhanced in the presence of muramyl dipeptide (MDP) and increases IL1B release. Interacts with EIF2AK2/PKR; this interaction requires EIF2AK2 activity, is accompanied by EIF2AK2 autophosphorylation and promotes inflammasome assembly in response to danger-associated signals. Interacts with MEFV; this interaction targets Nlrp1a to degradation by autophagy, hence preventing excessive IL1B- and IL18-mediated inflammation. Interacts with DPP9; leading to inhibit activation of the inflammasome. DPP9 acts via formation of a ternary complex, composed of a DPP9 homodimer, one full-length NLRP1 protein, and one cleaved C-terminus of Nlrp1a (NACHT, LRR and PYD domains-containing protein 1a, C-terminus). Interacts with DPP8; leading to inhibit activation of the inflammasome, probably via formation of a ternary complex with DPP8. Interacts with the C-terminal part of Nlrp1a (NACHT, LRR and PYD domains-containing protein 1a, C-terminus) in absence of pathogens and other damage-associated signals. In terms of assembly, interacts with the N-terminal part of Nlrp1a (NACHT, LRR and PYD domains-containing protein 1a, N-terminus) in absence of pathogens and other damage-associated signals. Homomultimer; forms the Nlrp1a inflammasome polymeric complex, a filament composed of homopolymers of this form in response to pathogens and other damage-associated signals. The Nlrp1a inflammasome polymeric complex directly recruits pro-caspase-1 (proCASP1) independently of PYCARD/ASC. Interacts (via CARD domain) with CASP1 (via CARD domain); leading to CASP1 activation. Autocatalytically cleaved. Autocatalytic cleavage in FIIND region occurs constitutively, prior to activation signals, and is required for inflammasome activity (IL1B release), possibly by facilitating CASP1 binding. Both N- and C-terminal parts remain associated non-covalently. Post-translationally, ubiquitinated in response to pathogen-associated signals, leading to its degradation by the proteasome and subsequent release of the cleaved C-terminal part of the protein (NACHT, LRR and PYD domains-containing protein 1a, C-terminus), which polymerizes and forms the Nlrp1a inflammasome.

It localises to the cytoplasm. It is found in the cytosol. The protein resides in the nucleus. Its subcellular location is the inflammasome. Its activity is regulated as follows. Activated by pathogens and other damage-associated signals: activation promotes ubiquitination and degradation of the N-terminal part, releasing the cleaved C-terminal part of the protein (NACHT, LRR and PYD domains-containing protein 1a, C-terminus), which polymerizes and forms the Nlrp1a inflammasome. Nlrp1a inflammasome is inhibited by DPP8 and DPP9, which sequester the C-terminal fragment of Nlrp1a (NACHT, LRR and PYD domains-containing protein 1a, C-terminus) in a ternary complex, thereby preventing Nlrp1a oligomerization and activation. Nlrp1a inflammasome is strongly activated by Val-boroPro (Talabostat, PT-100), an inhibitor of dipeptidyl peptidases DPP8 and DPP9. Val-boroPro relieves inhibition of DPP8 and/or DPP9 by promoting disruption of the ternary complex, releasing its C-terminal part from autoinhibition. Not activated by cleavage by B.anthracis lethal toxin (LT) endopeptidase. Highly activated by Toxoplasma gondii. Acts as the sensor component of the Nlrp1a inflammasome, which mediates inflammasome activation in response to various pathogen-associated signals, leading to subsequent pyroptosis. Inflammasomes are supramolecular complexes that assemble in the cytosol in response to pathogens and other damage-associated signals and play critical roles in innate immunity and inflammation. Acts as a recognition receptor (PRR): recognizes specific pathogens and other damage-associated signals, such as Val-boroPro inhibitor, and mediates the formation of the inflammasome polymeric complex. In response to pathogen-associated signals, the N-terminal part of Nlrp1a is degraded by the proteasome, releasing the cleaved C-terminal part of the protein (NACHT, LRR and PYD domains-containing protein 1a, C-terminus), which polymerizes to initiate the formation of the inflammasome complex: the inflammasome directly recruits pro-caspase-1 (proCASP1) independently of PYCARD/ASC and promotes caspase-1 (CASP1) activation, which subsequently cleaves and activates inflammatory cytokines IL1B and IL18 and gasdermin-D (GSDMD), leading to pyroptosis. In the absence of GSDMD expression, the Nlrp1a inflammasome is able to recruit and activate CASP8, leading to activation of gasdermin-E (GSDME). Functionally, constitutes the precursor of the Nlrp1a inflammasome, which mediates autoproteolytic processing within the FIIND domain to generate the N-terminal and C-terminal parts, which are associated non-covalently in absence of pathogens and other damage-associated signals. Its function is as follows. Regulatory part that prevents formation of the Nlrp1a inflammasome: in absence of pathogens and other damage-associated signals, interacts with the C-terminal part of Nlrp1a (NACHT, LRR and PYD domains-containing protein 1a, C-terminus), preventing activation of the Nlrp1a inflammasome. In response to pathogen-associated signals, this part is ubiquitinated by the N-end rule pathway and degraded by the proteasome, releasing the cleaved C-terminal part of the protein, which polymerizes and forms the Nlrp1a inflammasome. In terms of biological role, constitutes the active part of the Nlrp1a inflammasome. In absence of pathogens and other damage-associated signals, interacts with the N-terminal part of Nlrp1a (NACHT, LRR and PYD domains-containing protein 1a, N-terminus), preventing activation of the Nlrp1a inflammasome. In response to pathogen-associated signals, the N-terminal part of Nlrp1a is degraded by the proteasome, releasing this form, which polymerizes to form the Nlrp1a inflammasome complex: the Nlrp1a inflammasome complex then directly recruits pro-caspase-1 (proCASP1) and promotes caspase-1 (CASP1) activation, leading to gasdermin-D (GSDMD) cleavage and subsequent pyroptosis. The polypeptide is NACHT, LRR and PYD domains-containing protein 1a allele 5 (Rattus norvegicus (Rat)).